Here is a 528-residue protein sequence, read N- to C-terminus: Probable feruloyl esterase B-1 (528 aa).

A signal peptide spans 1–19; it reads MMWWFLLIGLASAAATASS. 6 cysteine pairs are disulfide-bonded: Cys29–Cys78, Cys64–Cys117, Cys190–Cys445, Cys259–Cys276, Cys285–Cys295, and Cys505–Cys527. N-linked (GlcNAc...) asparagine glycans are attached at residues Asn83 and Asn101. Ser191 (acyl-ester intermediate) is an active-site residue. Ca(2+) contacts are provided by Asp260, Asp263, Ala265, Asp267, and Ile269. Asn286, Asn354, and Asn385 each carry an N-linked (GlcNAc...) asparagine glycan. Residues Asp404 and His444 each act as charge relay system in the active site.

This sequence belongs to the tannase family.

The protein localises to the secreted. The catalysed reaction is feruloyl-polysaccharide + H2O = ferulate + polysaccharide.. Functionally, involved in degradation of plant cell walls. Hydrolyzes the feruloyl-arabinose ester bond in arabinoxylans as well as the feruloyl-galactose and feruloyl-arabinose ester bonds in pectin. This chain is Probable feruloyl esterase B-1 (faeB-1), found in Aspergillus fumigatus (strain ATCC MYA-4609 / CBS 101355 / FGSC A1100 / Af293) (Neosartorya fumigata).